The following is a 113-amino-acid chain: Large ribosomal subunit protein P2B (113 aa).

A disordered region spans residues 66-113; sequence PSGGGAIDMGAPAAVAGGGAAPAEEAKKEEKVEEKEESDEDMGFSLFD. Residues 89–99 show a composition bias toward basic and acidic residues; it reads EEAKKEEKVEE.

Belongs to the eukaryotic ribosomal protein P1/P2 family. In terms of assembly, P1 and P2 exist as dimers at the large ribosomal subunit. Post-translationally, phosphorylated.

In terms of biological role, plays an important role in the elongation step of protein synthesis. This Zea mays (Maize) protein is Large ribosomal subunit protein P2B (RPP2B).